The following is a 448-amino-acid chain: UDP-N-acetylmuramoylalanine--D-glutamate ligase (448 aa).

112–118 (GSNAKST) is an ATP binding site.

This sequence belongs to the MurCDEF family.

The protein resides in the cytoplasm. It catalyses the reaction UDP-N-acetyl-alpha-D-muramoyl-L-alanine + D-glutamate + ATP = UDP-N-acetyl-alpha-D-muramoyl-L-alanyl-D-glutamate + ADP + phosphate + H(+). Its pathway is cell wall biogenesis; peptidoglycan biosynthesis. In terms of biological role, cell wall formation. Catalyzes the addition of glutamate to the nucleotide precursor UDP-N-acetylmuramoyl-L-alanine (UMA). The sequence is that of UDP-N-acetylmuramoylalanine--D-glutamate ligase from Acinetobacter baumannii (strain ACICU).